The chain runs to 340 residues: Protein LSM14 homolog car-1 (340 aa).

A Sm domain is found at 1-81; the sequence is MSNQTPYIGS…IKDLIVCDTP (81 aa). Over residues 101–125 the composition is skewed to low complexity; that stretch reads SRSAPASDGAPAASAGSSRAGTPSR. A disordered region spans residues 101–148; it reads SRSAPASDGAPAASAGSSRAGTPSRNSPLGQIIQNQRPGRGGYQQNFQ. Positions 126 to 148 are enriched in polar residues; sequence NSPLGQIIQNQRPGRGGYQQNFQ. The DFDF domain maps to 178-214; it reads VNHREKLKFESDFDFEKANEKFQEVLVDNLEKLNIED. Residues 227 to 243 carry the FFD box motif; the sequence is AFYDKKTSFFDNISCES. Residues 251-271 carry the TFG box motif; it reads TGRPDWKKERETNQETFGHNA. The segment at 277 to 340 is disordered; that stretch reads YRRGFGGRGR…QGNTAAAAEQ (64 aa). Gly residues predominate over residues 280–296; that stretch reads GFGGRGRGGNRGYGGYN. Residues 312 to 325 are compositionally biased toward low complexity; that stretch reads GYRQNNGGYRRGGY.

Belongs to the LSM14 family.

The protein localises to the nucleus. Functionally, transcriptional regulator. Involved in modulating embryonic expression of ATP-dependent chaperone cdc-48.1. May play a role in mRNA gene silencing, and RNA granule (P-body) assembly. The sequence is that of Protein LSM14 homolog car-1 from Caenorhabditis elegans.